The following is a 317-amino-acid chain: Melanocyte-stimulating hormone receptor (317 aa).

A disordered region spans residues 1-23 (MSGQGPQRRLLGSPNATSPTTPH). Residues 1–37 (MSGQGPQRRLLGSPNATSPTTPHFKLAANQTGPRCLE) lie on the Extracellular side of the membrane. Residue N29 is glycosylated (N-linked (GlcNAc...) asparagine). A helical transmembrane segment spans residues 38–63 (VSIPNGLFLSLGLVSVVENVLVVAAI). At 64-72 (AKNRNLHSP) the chain is on the cytoplasmic side. The chain crosses the membrane as a helical span at residues 73–93 (MYYFIGCLAVSDLLVSVTNVL). At 94 to 118 (ETAVMLLVEAGALAAQAAVVQQLDD) the chain is on the extracellular side. Residues 119 to 140 (IIDVLICGSMVSSLCFLGAIAV) form a helical membrane-spanning segment. The Cytoplasmic segment spans residues 141 to 163 (DRYLSIFYALRYHSIVTLPRAWR). Residues 164–183 (AISAIWVASVLSSTLFIAYY) traverse the membrane as a helical segment. Topologically, residues 184–191 (NHTAVLLC) are extracellular. Residues 192–211 (LVSFFVAMLVLMAVLYVHML) form a helical membrane-spanning segment. At 212 to 240 (ARARQHARGIARLRKRQHSVHQGFGLKGA) the chain is on the cytoplasmic side. The helical transmembrane segment at 241–266 (ATLTILLGIFFLCWGPFFLHLSLMVL) threads the bilayer. At 267-279 (CPQHPICGCVFQN) the chain is on the extracellular side. A helical membrane pass occupies residues 280 to 300 (FNLFLTLIICNSIIDPFIYAF). Over 301-317 (RSQELRKTLQEVVLCSW) the chain is Cytoplasmic. The S-palmitoyl cysteine moiety is linked to residue C315.

The protein belongs to the G-protein coupled receptor 1 family. As to quaternary structure, interacts with MGRN1, but does not undergo MGRN1-mediated ubiquitination; this interaction competes with GNAS-binding and thus inhibits agonist-induced cAMP production. Interacts with OPN3; the interaction results in a decrease in MC1R-mediated cAMP signaling and ultimately a decrease in melanin production in melanocytes.

Its subcellular location is the cell membrane. Its function is as follows. Receptor for MSH (alpha, beta and gamma) and ACTH. The activity of this receptor is mediated by G proteins which activate adenylate cyclase. Mediates melanogenesis, the production of eumelanin (black/brown) and phaeomelanin (red/yellow), via regulation of cAMP signaling in melanocytes. This chain is Melanocyte-stimulating hormone receptor (MC1R), found in Vulpes vulpes (Red fox).